The following is a 292-amino-acid chain: NAD(P)H-hydrate epimerase (292 aa).

The transit peptide at 1 to 52 directs the protein to the mitochondrion; sequence MYGLRTLFSLGLLVGGARLGARVAQVGALGGTCPLGQGLVADGNSQCKQFRT. The 212-residue stretch at 68-279 folds into the YjeF N-terminal domain; that stretch reads AQAVDEELFN…ALEKKYSLNL (212 aa). 122-126 is a (6S)-NADPHX binding site; the sequence is NNGGD. Positions 123 and 189 each coordinate K(+). Residues 193-199 and aspartate 222 contribute to the (6S)-NADPHX site; that span reads GFSFKGA. Serine 225 is a binding site for K(+).

Belongs to the NnrE/AIBP family. K(+) serves as cofactor.

The protein localises to the mitochondrion. The protein resides in the secreted. It catalyses the reaction (6R)-NADHX = (6S)-NADHX. It carries out the reaction (6R)-NADPHX = (6S)-NADPHX. Catalyzes the epimerization of the S- and R-forms of NAD(P)HX, a damaged form of NAD(P)H that is a result of enzymatic or heat-dependent hydration. This is a prerequisite for the S-specific NAD(P)H-hydrate dehydratase to allow the repair of both epimers of NAD(P)HX. The chain is NAD(P)H-hydrate epimerase from Xenopus tropicalis (Western clawed frog).